The chain runs to 260 residues: Ribonuclease PH (260 aa).

Residues Arg-87 and 125 to 127 (GTR) each bind phosphate. The tract at residues 232 to 260 (LAAPPAAGPPAPERAGAGSGSGGKGTGSR) is disordered. A compositionally biased stretch (gly residues) spans 248 to 260 (AGSGSGGKGTGSR).

The protein belongs to the RNase PH family. Homohexameric ring arranged as a trimer of dimers.

The enzyme catalyses tRNA(n+1) + phosphate = tRNA(n) + a ribonucleoside 5'-diphosphate. Functionally, phosphorolytic 3'-5' exoribonuclease that plays an important role in tRNA 3'-end maturation. Removes nucleotide residues following the 3'-CCA terminus of tRNAs; can also add nucleotides to the ends of RNA molecules by using nucleoside diphosphates as substrates, but this may not be physiologically important. Probably plays a role in initiation of 16S rRNA degradation (leading to ribosome degradation) during starvation. This is Ribonuclease PH from Parafrankia sp. (strain EAN1pec).